A 239-amino-acid polypeptide reads, in one-letter code: Small ribosomal subunit protein uS2 (239 aa).

It belongs to the universal ribosomal protein uS2 family.

This chain is Small ribosomal subunit protein uS2, found in Francisella tularensis subsp. holarctica (strain FTNF002-00 / FTA).